The sequence spans 171 residues: 3-hydroxydecanoyl-[acyl-carrier-protein] dehydratase (171 aa).

Histidine 70 is a catalytic residue.

Belongs to the thioester dehydratase family. FabA subfamily. In terms of assembly, homodimer.

The protein resides in the cytoplasm. It catalyses the reaction a (3R)-hydroxyacyl-[ACP] = a (2E)-enoyl-[ACP] + H2O. The catalysed reaction is (3R)-hydroxydecanoyl-[ACP] = (2E)-decenoyl-[ACP] + H2O. It carries out the reaction (2E)-decenoyl-[ACP] = (3Z)-decenoyl-[ACP]. It participates in lipid metabolism; fatty acid biosynthesis. Necessary for the introduction of cis unsaturation into fatty acids. Catalyzes the dehydration of (3R)-3-hydroxydecanoyl-ACP to E-(2)-decenoyl-ACP and then its isomerization to Z-(3)-decenoyl-ACP. Can catalyze the dehydratase reaction for beta-hydroxyacyl-ACPs with saturated chain lengths up to 16:0, being most active on intermediate chain length. This chain is 3-hydroxydecanoyl-[acyl-carrier-protein] dehydratase, found in Xanthomonas euvesicatoria pv. vesicatoria (strain 85-10) (Xanthomonas campestris pv. vesicatoria).